Reading from the N-terminus, the 593-residue chain is UvrABC system protein C (593 aa).

The 78-residue stretch at 17–94 folds into the GIY-YIG domain; sequence MEPGCYLMKD…IKQYQPRYNI (78 aa). The UVR domain occupies 199 to 234; sequence KTILKSLEERMLTASESLDFERAKEYRDLIQHIQNL.

The protein belongs to the UvrC family. Interacts with UvrB in an incision complex.

It localises to the cytoplasm. Its function is as follows. The UvrABC repair system catalyzes the recognition and processing of DNA lesions. UvrC both incises the 5' and 3' sides of the lesion. The N-terminal half is responsible for the 3' incision and the C-terminal half is responsible for the 5' incision. The sequence is that of UvrABC system protein C from Staphylococcus aureus (strain USA300).